The chain runs to 440 residues: Xylose isomerase (440 aa).

Catalysis depends on residues histidine 101 and aspartate 104. Glutamate 232, glutamate 268, histidine 271, aspartate 296, aspartate 307, aspartate 309, and aspartate 339 together coordinate Mg(2+).

It belongs to the xylose isomerase family. As to quaternary structure, homotetramer. Mg(2+) serves as cofactor.

It localises to the cytoplasm. It catalyses the reaction alpha-D-xylose = alpha-D-xylulofuranose. This Cronobacter sakazakii (strain ATCC BAA-894) (Enterobacter sakazakii) protein is Xylose isomerase.